Reading from the N-terminus, the 346-residue chain is MTSQDNDHTAQTPARVLSGIQPTADSYHLGNYLGAVKQWIDLQNSYDAFYFIPDLHAITVDQNPEELRARTVSGAAQLLALGIDPERSTLFVQSHIPAHAELSWVLTCLTGFGEASRMTQFKDKSTKQGAERTSAGLFTYPMLMAADILLYRPQLVPVGEDQRQHLELTRTLAERFNNRFGTVFEVPEGFIPEGASKIYDLQNPTAKMSKSGENPKGLINLLDDPKVSSKRIKSAVTDNDGVIAFDVANKPGVSNLLVIQSALTGESVDKLVAGYEGKGYGALKTDTADALEAFTTPLRAKYDEYMSDRAELERVLAIGAERAGEIATKVLAEVYDKIGFLAPRSR.

Residues 21 to 23 (QPT) and 30 to 31 (GN) contribute to the ATP site. The short motif at 22–31 (PTADSYHLGN) is the 'HIGH' region element. Asp-147 contributes to the L-tryptophan binding site. Residues 159-161 (GED), Ile-198, and 207-211 (KMSKS) contribute to the ATP site. A 'KMSKS' region motif is present at residues 207–211 (KMSKS).

The protein belongs to the class-I aminoacyl-tRNA synthetase family. As to quaternary structure, homodimer.

The protein resides in the cytoplasm. It catalyses the reaction tRNA(Trp) + L-tryptophan + ATP = L-tryptophyl-tRNA(Trp) + AMP + diphosphate + H(+). Functionally, catalyzes the attachment of tryptophan to tRNA(Trp). This Corynebacterium efficiens (strain DSM 44549 / YS-314 / AJ 12310 / JCM 11189 / NBRC 100395) protein is Tryptophan--tRNA ligase.